A 164-amino-acid polypeptide reads, in one-letter code: uncharacterized protein (164 aa).

A signal peptide spans 1-25; sequence MMKTVKHLLCCAIAASALISTGVHA.

This is an uncharacterized protein from Escherichia coli (strain K12).